The following is a 223-amino-acid chain: tRNA (guanine-N(7)-)-methyltransferase (223 aa).

Aspartate 56, aspartate 81, aspartate 108, and aspartate 130 together coordinate S-adenosyl-L-methionine. Residue aspartate 130 is part of the active site. Residues lysine 134 and aspartate 166 each contribute to the substrate site.

The protein belongs to the class I-like SAM-binding methyltransferase superfamily. TrmB family.

It catalyses the reaction guanosine(46) in tRNA + S-adenosyl-L-methionine = N(7)-methylguanosine(46) in tRNA + S-adenosyl-L-homocysteine. Its pathway is tRNA modification; N(7)-methylguanine-tRNA biosynthesis. Functionally, catalyzes the formation of N(7)-methylguanine at position 46 (m7G46) in tRNA. The chain is tRNA (guanine-N(7)-)-methyltransferase from Rubrobacter xylanophilus (strain DSM 9941 / JCM 11954 / NBRC 16129 / PRD-1).